The following is a 37-amino-acid chain: Cytochrome b6-f complex subunit 5 (37 aa).

Residues 5-25 (LLSGIVLGLVPVTIAGLFVTA) traverse the membrane as a helical segment.

It belongs to the PetG family. As to quaternary structure, the 4 large subunits of the cytochrome b6-f complex are cytochrome b6, subunit IV (17 kDa polypeptide, PetD), cytochrome f and the Rieske protein, while the 4 small subunits are PetG, PetL, PetM and PetN. The complex functions as a dimer.

The protein resides in the plastid. It is found in the chloroplast thylakoid membrane. Component of the cytochrome b6-f complex, which mediates electron transfer between photosystem II (PSII) and photosystem I (PSI), cyclic electron flow around PSI, and state transitions. PetG is required for either the stability or assembly of the cytochrome b6-f complex. This is Cytochrome b6-f complex subunit 5 from Chlorella vulgaris (Green alga).